We begin with the raw amino-acid sequence, 158 residues long: Deoxyuridine 5'-triphosphate nucleotidohydrolase (158 aa).

Residues 75-77 (RSG), N88, 92-94 (TVD), and K102 each bind substrate.

This sequence belongs to the dUTPase family. It depends on Mg(2+) as a cofactor.

It carries out the reaction dUTP + H2O = dUMP + diphosphate + H(+). Its pathway is pyrimidine metabolism; dUMP biosynthesis; dUMP from dCTP (dUTP route): step 2/2. Functionally, this enzyme is involved in nucleotide metabolism: it produces dUMP, the immediate precursor of thymidine nucleotides and it decreases the intracellular concentration of dUTP so that uracil cannot be incorporated into DNA. This Bifidobacterium longum subsp. infantis (strain ATCC 15697 / DSM 20088 / JCM 1222 / NCTC 11817 / S12) protein is Deoxyuridine 5'-triphosphate nucleotidohydrolase.